The sequence spans 209 residues: Kynurenine formamidase (209 aa).

F19 serves as a coordination point for substrate. H49, H53, and D55 together coordinate Zn(2+). Residue H59 is the Proton donor/acceptor of the active site. Zn(2+)-binding residues include H160 and E172.

The protein belongs to the Cyclase 1 superfamily. KynB family. In terms of assembly, homodimer. The cofactor is Zn(2+).

The enzyme catalyses N-formyl-L-kynurenine + H2O = L-kynurenine + formate + H(+). It participates in amino-acid degradation; L-tryptophan degradation via kynurenine pathway; L-kynurenine from L-tryptophan: step 2/2. In terms of biological role, catalyzes the hydrolysis of N-formyl-L-kynurenine to L-kynurenine, the second step in the kynurenine pathway of tryptophan degradation. The polypeptide is Kynurenine formamidase (Delftia acidovorans (strain DSM 14801 / SPH-1)).